A 211-amino-acid chain; its full sequence is Uracil phosphoribosyltransferase (211 aa).

Residues Arg-77, Arg-102, and Asp-129 to Ser-137 each bind 5-phospho-alpha-D-ribose 1-diphosphate. Uracil-binding positions include Ile-192 and Gly-197–Ala-199. Residue Asp-198 coordinates 5-phospho-alpha-D-ribose 1-diphosphate.

The protein belongs to the UPRTase family. Requires Mg(2+) as cofactor.

It carries out the reaction UMP + diphosphate = 5-phospho-alpha-D-ribose 1-diphosphate + uracil. It functions in the pathway pyrimidine metabolism; UMP biosynthesis via salvage pathway; UMP from uracil: step 1/1. Its activity is regulated as follows. Allosterically activated by GTP. In terms of biological role, catalyzes the conversion of uracil and 5-phospho-alpha-D-ribose 1-diphosphate (PRPP) to UMP and diphosphate. The sequence is that of Uracil phosphoribosyltransferase from Corynebacterium diphtheriae (strain ATCC 700971 / NCTC 13129 / Biotype gravis).